The sequence spans 290 residues: Ribosomal protein L11 methyltransferase (290 aa).

Positions 136, 157, 179, and 222 each coordinate S-adenosyl-L-methionine.

Belongs to the methyltransferase superfamily. PrmA family.

The protein resides in the cytoplasm. The catalysed reaction is L-lysyl-[protein] + 3 S-adenosyl-L-methionine = N(6),N(6),N(6)-trimethyl-L-lysyl-[protein] + 3 S-adenosyl-L-homocysteine + 3 H(+). Its function is as follows. Methylates ribosomal protein L11. The polypeptide is Ribosomal protein L11 methyltransferase (Porphyromonas gingivalis (strain ATCC BAA-308 / W83)).